The following is a 355-amino-acid chain: Tabersonine 16-O-methyltransferase (355 aa).

Residues 198 to 201 (IGGG), Asp222, 222 to 223 (DL), 242 to 243 (DM), and Lys256 each bind S-adenosyl-L-methionine. The active-site Proton acceptor is the His260.

The protein belongs to the class I-like SAM-binding methyltransferase superfamily. Cation-independent O-methyltransferase family. COMT subfamily. Homodimer. Expressed in leaves and flowers. Detected in stems and roots. In leaves, expressed in epidermal cells.

It is found in the cytoplasm. The catalysed reaction is 16-hydroxytabersonine + S-adenosyl-L-methionine = 16-methoxytabersonine + S-adenosyl-L-homocysteine + H(+). It functions in the pathway alkaloid biosynthesis; vindoline biosynthesis. In terms of biological role, 16-O-methyltransferase involved in the biosynthesis of vindoline. Highly specific for 16-hydroxytabersonine. No activity with tabersonine, 3-hydroxytyramine, 4-hydroxytyramine, 5-hydroxytryptamine (5HT), 2,3-dihydro-3-hydroxytabersonine, lochnericine, hoerhammericine, 16-hydroxy-2,3-dihydro-3-hydroxytabersonine, 16-hydroxylochnericine, 16-hydroxyhoerhammericine, quercetin, kaempferol and caffeic acid as substrates. This is Tabersonine 16-O-methyltransferase from Catharanthus roseus (Madagascar periwinkle).